Here is a 401-residue protein sequence, read N- to C-terminus: Multidrug resistance protein MdtH (401 aa).

At 1–12 the chain is on the cytoplasmic side; that stretch reads MSRVSQARNLGK. A helical membrane pass occupies residues 13 to 33; that stretch reads YFLLIDNMLVVLGFFVVFPLV. Topologically, residues 34 to 98 are periplasmic; the sequence is SIRFVDQMGW…GFATMGIAHE (65 aa). A helical membrane pass occupies residues 99-116; it reads PWLLWFSCLLSGLGGTLF. Topologically, residues 117 to 137 are cytoplasmic; that stretch reads DPPRSALVVKLMPQQRGRFFS. Residues 138–158 form a helical membrane-spanning segment; sequence LLMMQDSAGAVIGALLGSWLL. Residues 159 to 163 are Periplasmic-facing; that stretch reads QYDFR. A helical transmembrane segment spans residues 164–184; the sequence is LVCATGAVLFVLCAAFNAWLL. The Cytoplasmic segment spans residues 185–212; that stretch reads PAWKLSTIRTPVREGMTRVMRDKRFVTY. A helical membrane pass occupies residues 213-233; it reads VLTLAGYYMLAVQVMLMLPIM. Residues 234 to 242 are Periplasmic-facing; that stretch reads VNDVAGAPS. The chain crosses the membrane as a helical span at residues 243–263; it reads AVKWMYAIEACLSLTLLYPIA. The Cytoplasmic portion of the chain corresponds to 264-275; that stretch reads RWSEKHFRLEHR. Residues 276–296 traverse the membrane as a helical segment; the sequence is LMAGLLIMSLSMMPVGMVSGL. At 297-298 the chain is on the periplasmic side; the sequence is QQ. A helical transmembrane segment spans residues 299–319; that stretch reads LFTLICLFYIGSIIAEPARET. At 320 to 338 the chain is on the cytoplasmic side; the sequence is LSASLADARARGSYMGFSR. Residues 339 to 359 traverse the membrane as a helical segment; it reads LGLAIGGTIGYIGGGWLFDLG. The Periplasmic segment spans residues 360–366; sequence KSAHQPE. The chain crosses the membrane as a helical span at residues 367-387; it reads LPWMMLGIIGIFTFLALGWQF. Residues 388 to 401 lie on the Cytoplasmic side of the membrane; it reads SQKRAARRLLERDA.

It belongs to the major facilitator superfamily. DHA1 family. MdtH (TC 2.A.1.2.21) subfamily.

It is found in the cell inner membrane. This Shigella dysenteriae serotype 1 (strain Sd197) protein is Multidrug resistance protein MdtH.